The chain runs to 598 residues: Kinetochore-associated protein KNL-2 homolog (598 aa).

One can recognise an SANTA domain in the interval 19–111 (VVLRDWWLIK…IFGFPPCWER (93 aa)). Basic and acidic residues-rich tracts occupy residues 335-344 (AKSSKPEKKG) and 371-381 (KSAENKRKIDA). Disordered regions lie at residues 335 to 403 (AKSS…NNAK), 445 to 500 (KESL…EEAE), 520 to 542 (PEKKVKQQKTNAASTDSLGQKRS), and 572 to 598 (KDGSETNSAPSKGKGSDSRKRRNLKIK). Over residues 383–392 (KLQSPTSNVA) the composition is skewed to polar residues. Over residues 527-539 (QKTNAASTDSLGQ) the composition is skewed to polar residues. Positions 538 to 572 (GQKRSRSGRVLVSSLEFWRNQIPVYDMDRNLIQVK) are required for localization at centromeres.

This sequence belongs to the KNL2 family. Expressed in shoot apical meristem, leaf primordia, basal parts of emerging leaves, inflorescence meristems, young inflorescences, developing flower buds, developing sepals and pistils, styles and young siliques.

The protein localises to the nucleus. The protein resides in the nucleoplasm. It localises to the nuclear body. Its subcellular location is the nucleolus. It is found in the chromosome. The protein localises to the centromere. Its function is as follows. Involved in recognition of centromeres and centromeric localization of the centromere-specific histone CENH3. Required for normal progression of mitosis and meiosis. May play a role in the determination of the epigenetic status of centromeres. Binds DNA and RNA in vitro. The protein is Kinetochore-associated protein KNL-2 homolog of Arabidopsis thaliana (Mouse-ear cress).